The following is a 260-amino-acid chain: Ribosome maturation factor RimP (260 aa).

Basic and acidic residues-rich tracts occupy residues 189–199 (RRGRDAEREQL) and 215–227 (AREM…PRKE). The segment at 189 to 260 (RRGRDAEREQ…QTTSDPHQGE (72 aa)) is disordered. Residues 228–242 (KTAKKPLPKNTKAHR) show a composition bias toward basic residues.

The protein belongs to the RimP family.

It localises to the cytoplasm. In terms of biological role, required for maturation of 30S ribosomal subunits. In Afipia carboxidovorans (strain ATCC 49405 / DSM 1227 / KCTC 32145 / OM5) (Oligotropha carboxidovorans), this protein is Ribosome maturation factor RimP.